A 256-amino-acid polypeptide reads, in one-letter code: Homeobox-leucine zipper protein HOX28 (256 aa).

Residues 56–86 (ACSPGSPVSSGSGKRGSGSGSGDEVDDAGCD) form a disordered region. A compositionally biased stretch (low complexity) spans 58 to 67 (SPGSPVSSGS). The homeobox DNA-binding region spans 91-150 (GARKKLRLSKDQAAVLEECFKTHHTLTPKQKVALAKSLNLRPRQVEVWFQNRRARTKLKQ). The leucine-zipper stretch occupies residues 149 to 193 (KQTEVDCEHLKRWCDQLADDNRRLHKELAELRALKATPTPPAAAP).

The protein belongs to the HD-ZIP homeobox family. Class II subfamily. As to expression, expressed in seedlings, roots, stems and panicles.

It is found in the nucleus. Probable transcription factor. This is Homeobox-leucine zipper protein HOX28 (HOX28) from Oryza sativa subsp. indica (Rice).